The primary structure comprises 865 residues: Anaphase-promoting complex subunit 2 (865 aa).

The protein belongs to the cullin family. In terms of assembly, the APC/C is composed of at least 10 subunits. Interacts with APC8, APC11, CDC27A and CDC27B. As to expression, highly expressed in immature flowers. Expressed in stems, leaves and flowers.

It localises to the nucleus. Its pathway is protein modification; protein ubiquitination. Its function is as follows. Component of the anaphase promoting complex/cyclosome (APC/C), a cell cycle-regulated E3 ubiquitin-protein ligase complex that controls progression through mitosis and the G1 phase of the cell cycle. The APC/C complex controls several key steps in the cell cycle by mediating ubiquitination and subsequent degradation of target proteins such as cyclins. The APC/C complex is required for the female gametophyte development and is involved in several aspect of development by controlling cell division and cell elongation. Involved in the control of endoreduplication. The chain is Anaphase-promoting complex subunit 2 (APC2) from Arabidopsis thaliana (Mouse-ear cress).